A 469-amino-acid chain; its full sequence is MSALTPPTDMPTPTTDKITQAAMETIYLCKFRVSMDGEWLCLRELDDISLTPDPEPTHEDPNYLMANERMNLMNMAKLSIKGLIESALNLGRTLDSDYAPLQQFFVVMEHCLKHGLKAKKTFLGQNKSFWGPLELVEKLVPEAAEITASVKDLPGLKTPVGRGRAWLRLALMQKKLSEYMKALINKKELLSEFYEANALMMEEEGAIIAGLLVGLNVIDANFCMKGEDLDSQVGVIDFSMYLKDGNSSKGSEGDGQITAILDQKNYVEELNRHLNATVNNLQAKVDALEKSNTKLTEELAVANNRIITLQEEMERVKEESSYLLESNRKGPKQDRTAEGQALSEARKHLKEETQLRLDVEKELELQISMRQEMELAMKMLEKDVCEKQDALVSLRQQLDDLRALKHELAFKLQSSDLGVKQKSELNSRLEEKTNQMAATIKQLEQSEKDLVKQAKTLNSAANKLIPKHH.

Threonine 5 and threonine 12 each carry phosphothreonine. 2 positions are modified to phosphoserine: serine 34 and serine 49. Residue threonine 51 is modified to Phosphothreonine. Positions 95–227 (DSDYAPLQQF…IDANFCMKGE (133 aa)) constitute an RUN domain. 2 coiled-coil regions span residues 271-362 (NRHL…VEKE) and 422-463 (KSEL…AANK).

As to quaternary structure, interacts with PAK1. Interacts (via C-terminus) with Ras-related Rab-5 proteins. Interacts (via C-terminus) with Ras-related Rap-2 proteins. Interacts with PIK3CA and PIK3R1. Interacts (via N-terminus) with FSCN1; this interaction induces neuron axon development. Interacts with DBN1. Interacts (via the second coiled coil) with GTP-, but not GDP-bound ARL8A and ARL8B. Interacts with dynactin/DCTN1 and the dynein intermediate chain DYNC1I1/2. Directly interacts with DYNC1LI1. In terms of processing, isoform 1 is partially phosphorylated. Phosphorylated by PAK1. In terms of tissue distribution, expressed in brain (at protein level).

It is found in the cytoplasm. The protein localises to the endomembrane system. It localises to the cell projection. Its subcellular location is the invadopodium. The protein resides in the growth cone. It is found in the perikaryon. The protein localises to the filopodium. It localises to the lamellipodium. Its subcellular location is the lysosome. In terms of biological role, ARL8 effector that promotes the coupling of endolysosomes to dynein-dynactin for retrograde transport along microtubules. Acts by binding both GTP-bound ARL8 and dynein-dynactin. In nonneuronal cells, promotes concentration of endolysosomes in the juxtanuclear area. In hippocampal neurons, drives retrograde transport of endolysosomes from the axon to the soma. Plays a role in the generation of neuronal polarity formation and axon growth. Implicated in the formation of a single axon by developing neurons. May inhibit the formation of additional axons by inhibition of PI3K in minor neuronal processes. Plays a role in the formation of F-actin-enriched protrusive structures at the cell periphery. Plays a role in cytoskeletal organization by regulating the subcellular localization of FSCN1 and DBN1 at axonal growth cones. This chain is Protein RUFY3, found in Rattus norvegicus (Rat).